A 465-amino-acid chain; its full sequence is Trigger factor (465 aa).

Positions 163-248 (GDVINFNFKG…INKIKENQPA (86 aa)) constitute a PPIase FKBP-type domain. Residues 431–465 (EIVNKNQNDNEIEQDKEQKDNNEEKIKQENNLENK) are disordered. Basic and acidic residues predominate over residues 443 to 465 (EQDKEQKDNNEEKIKQENNLENK).

This sequence belongs to the FKBP-type PPIase family. Tig subfamily.

Its subcellular location is the cytoplasm. It carries out the reaction [protein]-peptidylproline (omega=180) = [protein]-peptidylproline (omega=0). Involved in protein export. Acts as a chaperone by maintaining the newly synthesized protein in an open conformation. Functions as a peptidyl-prolyl cis-trans isomerase. This is Trigger factor from Mesomycoplasma hyopneumoniae (strain 232) (Mycoplasma hyopneumoniae).